Here is a 236-residue protein sequence, read N- to C-terminus: MRITWFGHSAFRLDFGASHVLIDPFFTGNPAFEGGDAARASAVEGATHILITHGHGDHVGDTLAVAGETGAKVVTNYDLCMWLASKGLTNFDPMNTGGTTDQGAFRVTLVHADHSAGMSEAGVTVPLGLPNGIIVRAAGEPTVYHMGDTDIFGDMALIQEIYRPDVLMVPIGDRFTMGAETAALAVRKFFAPKAVIPCHYGSFPIIAPSADAFVSALDGSGIQVVVPHKGTAVTIP.

Belongs to the UPF0173 family.

This Methylobacterium nodulans (strain LMG 21967 / CNCM I-2342 / ORS 2060) protein is UPF0173 metal-dependent hydrolase Mnod_3315.